Here is an 899-residue protein sequence, read N- to C-terminus: Receptor-like protein kinase At3g21340 (899 aa).

Residues 1–27 form the signal peptide; it reads MEYHPQAIRLCALIFISFYALLHLVEA. The Extracellular portion of the chain corresponds to 28 to 522; that stretch reads QDQKGFISLD…GAKKMNVVIP (495 aa). N-linked (GlcNAc...) asparagine glycans are attached at residues Asn100, Asn146, Asn185, Asn240, Asn266, Asn420, Asn436, Asn449, Asn468, and Asn475. LRR repeat units follow at residues 415 to 438, 439 to 461, and 463 to 485; these read IVTS…QNLT, HLQE…LADI, and SLLV…LLQK. The helical transmembrane segment at 523-543 threads the bilayer; that stretch reads IVASVAFVVVLGSALAFFFIF. Residues 544 to 899 are Cytoplasmic-facing; sequence KKKKTSNSQD…FDIGATPDAR (356 aa). A Phosphothreonine modification is found at Thr583. A Protein kinase domain is found at 592-865; the sequence is NNFERVLGKG…QVVIELNECL (274 aa). Residues 598–606 and Lys620 each bind ATP; that span reads LGKGGFGMV. A Phosphotyrosine modification is found at Tyr665. The active-site Proton acceptor is the Asp717. Ser751 is subject to Phosphoserine. Residues Thr752 and Thr757 each carry the phosphothreonine modification. Tyr765 is subject to Phosphotyrosine.

It belongs to the protein kinase superfamily. Ser/Thr protein kinase family. Post-translationally, autophosphorylated on Tyr and Thr residues.

The protein resides in the cell membrane. It carries out the reaction L-seryl-[protein] + ATP = O-phospho-L-seryl-[protein] + ADP + H(+). The catalysed reaction is L-threonyl-[protein] + ATP = O-phospho-L-threonyl-[protein] + ADP + H(+). It catalyses the reaction L-tyrosyl-[protein] + ATP = O-phospho-L-tyrosyl-[protein] + ADP + H(+). Functionally, probable receptor with a dual specificity kinase activity acting on both serine/threonine- and tyrosine-containing substrates. The polypeptide is Receptor-like protein kinase At3g21340 (Arabidopsis thaliana (Mouse-ear cress)).